A 338-amino-acid chain; its full sequence is 4'-phosphopantetheinyl transferase (338 aa).

It belongs to the P-Pant transferase superfamily.

The catalysed reaction is apo-[ACP] + CoA = holo-[ACP] + adenosine 3',5'-bisphosphate + H(+). In terms of biological role, acyl-carrier-protein synthase that transfers the 4'-phosphopantetheine moiety from coenzyme A to a Ser of an acyl-carrier-protein. The 4'-phosphopantetheine (4'-PPT) portion of CoA provides the essential prosthetic group for a number of carrier proteins and multi-domain enzymes, priming them for the acceptance of acyl building blocks in fatty acid synthesis and many aspects of secondary metabolism mediated by polyketide synthases (PKSs) and non-ribosomal peptide synthetases (NRPSs). Plays a key role in liamocins biosynthesis by activationg the HR-PKS PKS1 that produces 3,5-dihydroxydecanoic acid, a precursor of liamocins. This is 4'-phosphopantetheinyl transferase from Aureobasidium melanogenum (Aureobasidium pullulans var. melanogenum).